We begin with the raw amino-acid sequence, 417 residues long: Aminoacyltransferase FemB (417 aa).

This sequence belongs to the FemABX family.

The protein localises to the cytoplasm. The catalysed reaction is MurNAc-L-Ala-D-isoglutaminyl-L-Lys-(N(6)-tri-Gly)-D-Ala-D-Ala-diphospho-di-trans,octa-cis-undecaprenyl-GlcNAc + 2 glycyl-tRNA(Gly) = MurNAc-L-Ala-D-isoglutaminyl-L-Lys-(N(6)-penta-Gly)-D-Ala-D-Ala-diphospho-di-trans,octa-cis-undecaprenyl-GlcNAc + 2 tRNA(Gly) + 2 H(+). Functionally, catalyzes the incorporation of amino acid(s) into the interchain peptide bridge of peptidoglycan, using aminoacyl-tRNA as amino acid donor. The protein is Aminoacyltransferase FemB (femB) of Staphylococcus epidermidis (strain ATCC 12228 / FDA PCI 1200).